Consider the following 48-residue polypeptide: Large ribosomal subunit protein bL32 (48 aa).

The segment covering 1–20 has biased composition (basic residues); sequence MAVPKRRVSKTRAAKRRTHY. The interval 1–48 is disordered; sequence MAVPKRRVSKTRAAKRRTHYKVSLPMPVKDKDGSYKMPHRANPTTKEY.

Belongs to the bacterial ribosomal protein bL32 family.

In Campylobacter jejuni subsp. doylei (strain ATCC BAA-1458 / RM4099 / 269.97), this protein is Large ribosomal subunit protein bL32.